The primary structure comprises 502 residues: L-arabinose isomerase (502 aa).

The Mn(2+) site is built by E307, E334, H351, and H450.

Belongs to the arabinose isomerase family. Mn(2+) is required as a cofactor.

The enzyme catalyses beta-L-arabinopyranose = L-ribulose. It participates in carbohydrate degradation; L-arabinose degradation via L-ribulose; D-xylulose 5-phosphate from L-arabinose (bacterial route): step 1/3. Catalyzes the conversion of L-arabinose to L-ribulose. This Nocardioides sp. (strain ATCC BAA-499 / JS614) protein is L-arabinose isomerase.